A 230-amino-acid chain; its full sequence is Ribonuclease 3 (230 aa).

An RNase III domain is found at 6-135 (TTELKERYGI…FLGALYLDQK (130 aa)). Glu48 serves as a coordination point for Mg(2+). Residue Asp52 is part of the active site. The Mg(2+) site is built by Asp121 and Glu124. Glu124 is a catalytic residue. Residues 161–230 (DHKTQLQEVL…AERALKSIPQ (70 aa)) form the DRBM domain.

The protein belongs to the ribonuclease III family. Homodimer. It depends on Mg(2+) as a cofactor.

Its subcellular location is the cytoplasm. The enzyme catalyses Endonucleolytic cleavage to 5'-phosphomonoester.. Functionally, digests double-stranded RNA. Involved in the processing of primary rRNA transcript to yield the immediate precursors to the large and small rRNAs (23S and 16S). Processes some mRNAs, and tRNAs when they are encoded in the rRNA operon. Processes pre-crRNA and tracrRNA of type II CRISPR loci if present in the organism. The chain is Ribonuclease 3 from Enterococcus faecalis (strain ATCC 700802 / V583).